The chain runs to 581 residues: Potassium-transporting ATPase potassium-binding subunit (581 aa).

Helical transmembrane passes span 2–22, 74–94, 135–155, 177–197, 255–275, 284–304, 332–352, 357–377, 381–401, 421–441, 501–521, and 550–570; these read LQGWIQIALTILIIVAITPFF, AVIAILVFSLIAGQGVLPLNP, GLGYQMFTSAGTGLAVGIAFI, ILLPISIVGAIALIIAGVPET, LVQLVAILSIPTSLIYTYGVF, LIYLIPLGIFIGFTIITAIGE, WAQSALYAVTTTATMCGAVIA, LMPNGGFATLSNLFLQIVFGG, GTAYLFAYLILAVFVTGLMVG, FLILLVHPIAILIPGAIALAF, LSACFSLLAGRYIPIAALLLL, and AGVILILGALTFLPILALGPI.

Belongs to the KdpA family. In terms of assembly, the system is composed of three essential subunits: KdpA, KdpB and KdpC.

It localises to the cell inner membrane. Its function is as follows. Part of the high-affinity ATP-driven potassium transport (or Kdp) system, which catalyzes the hydrolysis of ATP coupled with the electrogenic transport of potassium into the cytoplasm. This subunit binds the periplasmic potassium ions and delivers the ions to the membrane domain of KdpB through an intramembrane tunnel. This Microcystis aeruginosa (strain NIES-843 / IAM M-2473) protein is Potassium-transporting ATPase potassium-binding subunit.